A 563-amino-acid polypeptide reads, in one-letter code: Solute carrier family 22 member 1 (563 aa).

The Cytoplasmic segment spans residues 1-21 (MLTVDDVLEQVGEFGWFQKQT). A helical membrane pass occupies residues 22–42 (FLILCLLSAAFAPIYVGIVFL). Over 43–144 (AFTPDHRCRS…LVCDDSWKVD (102 aa)) the chain is Extracellular. A glycan (N-linked (GlcNAc...) asparagine) is linked at Asn-71. A helical transmembrane segment spans residues 145 to 165 (LFQSCVNLGFFLGSLGVGYIA). Residues 166–171 (DRFGRK) are Cytoplasmic-facing. A helical transmembrane segment spans residues 172-192 (VCLLATTLTCASLGVLTAVAP). Topologically, residues 193-196 (DYTS) are extracellular. The helical transmembrane segment at 197–219 (LLIFRLLQGLVSKGSWTAGYTLI) threads the bilayer. At 220–232 (TEFVGLGYRRTVA) the chain is on the cytoplasmic side. Residues 233-253 (ILYQMAFTVGLVLLSGLAYIL) traverse the membrane as a helical segment. Residues 254–257 (PHWR) lie on the Extracellular side of the membrane. The chain crosses the membrane as a helical span at residues 258 to 278 (WLQLAVSLPIFLLLFRFWFVP). A Proline-rich sequence motif is present at residues 278 to 282 (PESPR). Topologically, residues 279–342 (ESPRWLLSQK…FRTPNLRKYT (64 aa)) are cytoplasmic. A Phosphoserine modification is found at Ser-328. Residues 343-363 (FILMYLWFTSSVVYQGLIMHV) form a helical membrane-spanning segment. Residues 364 to 371 (GATGGNLY) lie on the Extracellular side of the membrane. The chain crosses the membrane as a helical span at residues 372–392 (LDFLYSALVEFPAGFIILVTI). Residues 393 to 398 (DRFGRR) are Cytoplasmic-facing. The chain crosses the membrane as a helical span at residues 399–418 (YPLATSNLAAGLACFLMIFI). Residues 419–423 (PHDLP) lie on the Extracellular side of the membrane. A helical transmembrane segment spans residues 424-446 (WLNIMVACVGRMGITIVFQMVCL). At 447–459 (VNAELFPTFIRNL) the chain is on the cytoplasmic side. Residues 460–480 (GMMVCSSLCDLGGVLTPFLVF) form a helical membrane-spanning segment. Topologically, residues 481–487 (RLMEVWQ) are extracellular. Residues 488-508 (GSPLILFAALGLVAGGMTLLL) form a helical membrane-spanning segment. The Cytoplasmic segment spans residues 509–563 (PETKGVTLPETIEDAENLQRKAKPKENKIYLQVQTSELNTQAAERDASQGTAQQK).

The protein belongs to the major facilitator (TC 2.A.1) superfamily. Organic cation transporter (TC 2.A.1.19) family. In terms of processing, phosphorylated.

The protein resides in the basolateral cell membrane. The protein localises to the apical cell membrane. Its subcellular location is the lateral cell membrane. It localises to the basal cell membrane. It is found in the cell membrane. It catalyses the reaction 1-methylnicotinamide(out) = 1-methylnicotinamide(in). The enzyme catalyses dopamine(out) = dopamine(in). The catalysed reaction is serotonin(out) = serotonin(in). It carries out the reaction (R)-adrenaline(out) = (R)-adrenaline(in). It catalyses the reaction (R)-noradrenaline(out) = (R)-noradrenaline(in). The enzyme catalyses histamine(out) = histamine(in). The catalysed reaction is guanidine(out) = guanidine(in). It carries out the reaction choline(out) = choline(in). It catalyses the reaction acetylcholine(in) = acetylcholine(out). The enzyme catalyses thiamine(in) = thiamine(out). The catalysed reaction is spermidine(in) = spermidine(out). It carries out the reaction agmatine(out) = agmatine(in). It catalyses the reaction putrescine(out) = putrescine(in). The enzyme catalyses (R)-carnitine(in) = (R)-carnitine(out). The catalysed reaction is O-isobutanoyl-(R)-carnitine(in) = O-isobutanoyl-(R)-carnitine(out). It carries out the reaction O-acetyl-(R)-carnitine(in) = O-acetyl-(R)-carnitine(out). It catalyses the reaction O-3-hydroxybutanoyl-(R)-carnitine(in) = O-3-hydroxybutanoyl-(R)-carnitine(out). The enzyme catalyses O-propanoyl-(R)-carnitine(in) = O-propanoyl-(R)-carnitine(out). The catalysed reaction is O-butanoyl-(R)-carnitine(in) = O-butanoyl-(R)-carnitine(out). It carries out the reaction O-2-methylbutanoyl-(R)-carnitine(in) = O-2-methylbutanoyl-(R)-carnitine(out). It catalyses the reaction O-3-methylbutanoyl-(R)-carnitine(in) = O-3-methylbutanoyl-(R)-carnitine(out). The enzyme catalyses O-hexanoyl-(R)-carnitine(in) = O-hexanoyl-(R)-carnitine(out). The catalysed reaction is L-histidyl-L-proline diketopiperazine(in) = L-histidyl-L-proline diketopiperazine(out). It carries out the reaction (R)-salsolinol(in) = (R)-salsolinol(out). It catalyses the reaction prostaglandin F2alpha(out) = prostaglandin F2alpha(in). The enzyme catalyses prostaglandin E2(out) = prostaglandin E2(in). Its activity is regulated as follows. Phosphorylation of the transporter leads to changes in its substrate affinity, resulting in a regulation of the transport activity. In contrast with rat ortholog, ASP uptake is inhibited by protein kinase A (PKA) and C (PKC) activation. ASP uptake is also endogenously activated by calmodulin, the calmodulin-dependent kinase II and LCK tyrosine kinase. Inhibited by cGMP, most likely through a cGMP-binding protein that interacts with OCT1. Functionally, electrogenic voltage-dependent transporter that mediates the transport of a variety of organic cations such as endogenous bioactive amines, cationic drugs and xenobiotics. Functions as a pH- and Na(+)-independent, bidirectional transporter. Cation cellular uptake or release is driven by the electrochemical potential (i.e. membrane potential and concentration gradient) and substrate selectivity. Hydrophobicity is a major requirement for recognition in polyvalent substrates and inhibitors. Primarily expressed in the basolateral membrane of hepatocytes and proximal tubules and involved in the uptake and disposition of cationic compounds from the blood by hepatic and renal clearance. Most likely functions as an uptake carrier in enterocytes contributing to the intestinal elimination of organic cations from the systemic circulation. Transports endogenous monoamines such as N-1-methylnicotinamide (NMN), guanidine, neurotransmitters dopamine, serotonin, noradrenaline, adrenaline and histamine, and quaternary ammonium compound such as choline. Also transports natural polyamines such as spermidine, agmatine and putrescine at low affinity, but relatively high turnover. Involved in the hepatic and intestinal uptake of the vitamin B1/thiamine, hence regulating hepatic lipid and energy metabolism. Contributes to the influx and efflux of fatty acid carriers carnitines and acylcarnitines across the basolateral membrane of hepatocytes, from the liver to the systemic circulation and inversely and may be involved in regulating the systemic availability of hepatic acylcarnitines. Also capable of transporting non-amine endogenous compounds such as prostaglandin E2 (PGE2) and prostaglandin F2-alpha (PGF2-alpha). May contribute to the transport of cationic compounds in testes across the blood-testis-barrier. Also mediates the uptake of xenobiotics tributylmethylammonium (TBuMA), quinidine, N-methyl-quinine (NMQ), N-methyl-quinidine (NMQD) N-(4,4-azo-n-pentyl)-quinuclidine (APQ), azidoprocainamide methoiodide (AMP), N-(4,4-azo-n-pentyl)-21-deoxyajmalinium (APDA) and 4-(4-(dimethylamino)styryl)-N-methylpyridinium (ASP). In Bos taurus (Bovine), this protein is Solute carrier family 22 member 1 (SLC22A1).